We begin with the raw amino-acid sequence, 643 residues long: 1-deoxy-D-xylulose-5-phosphate synthase (643 aa).

Thiamine diphosphate is bound by residues H89 and G130–S132. D161 contacts Mg(2+). Thiamine diphosphate is bound by residues G162–A163, N190, F297, and E380. N190 contributes to the Mg(2+) binding site.

This sequence belongs to the transketolase family. DXPS subfamily. In terms of assembly, homodimer. It depends on Mg(2+) as a cofactor. The cofactor is thiamine diphosphate.

It carries out the reaction D-glyceraldehyde 3-phosphate + pyruvate + H(+) = 1-deoxy-D-xylulose 5-phosphate + CO2. The protein operates within metabolic intermediate biosynthesis; 1-deoxy-D-xylulose 5-phosphate biosynthesis; 1-deoxy-D-xylulose 5-phosphate from D-glyceraldehyde 3-phosphate and pyruvate: step 1/1. Catalyzes the acyloin condensation reaction between C atoms 2 and 3 of pyruvate and glyceraldehyde 3-phosphate to yield 1-deoxy-D-xylulose-5-phosphate (DXP). This is 1-deoxy-D-xylulose-5-phosphate synthase from Hahella chejuensis (strain KCTC 2396).